We begin with the raw amino-acid sequence, 128 residues long: Large ribosomal subunit protein bL17 (128 aa).

This sequence belongs to the bacterial ribosomal protein bL17 family. As to quaternary structure, part of the 50S ribosomal subunit. Contacts protein L32.

The sequence is that of Large ribosomal subunit protein bL17 from Hydrogenovibrio crunogenus (strain DSM 25203 / XCL-2) (Thiomicrospira crunogena).